Reading from the N-terminus, the 312-residue chain is Polyhedral envelope protein (312 aa).

It belongs to the baculoviridae PE family.

It localises to the virion membrane. In terms of biological role, major component of the polyhedra envelope. This chain is Polyhedral envelope protein, found in Lymantria dispar multicapsid nuclear polyhedrosis virus (LdMNPV).